The chain runs to 519 residues: MAPPGQLLPLARSLLPLSAPPFVSGRRRRLPTLVLGRALPPPTWLPHGRLSPAHPLPFAPPRRLSRPPPPATSLPGASPGGGAEAQAVLAEFVTSERVKVAAMLGLALALCNADRVVMSVAIVPLSQAYGWTPSFAGVVQSSFLWGYLVSPIIGGALVDYYGGKRVMAYGVALWSLATFLSPWAAARSLWLFLSTRVLLGMAEGVALPSMNNMVLRWFPRTERSSAVGIAMAGFQLGNTIGLLLSPIIMSRAGIFGPFVIFGLFGFLWVLVWISAISGTPGENAQISAHELDYITRGQKLVKTQSGGERLRKVPPFSKLLSKWPTWALISANAMHSWGYFVILSWMPVYFKTIYHVNLREAAWFSALPWVMMAVLGYVAGVVSDRLIQNGTSITLTRKIMQTIGFVGPGVALLGLNAAKSPVIASAWLTIAVGLKSFGHSGFLVNLQEIAPQYAGVLHGMSNTAGTFAAILGTVGAGFFVDRMGSFRGFLILTSLLYFSSTLFWDIFATGERVDFDGTG.

The N-terminal 76 residues, 1 to 76, are a transit peptide targeting the chloroplast; the sequence is MAPPGQLLPL…PPPPATSLPG (76 aa). Residues 56–72 are compositionally biased toward pro residues; the sequence is LPFAPPRRLSRPPPPAT. The interval 56–82 is disordered; it reads LPFAPPRRLSRPPPPATSLPGASPGGG. 12 helical membrane passes run 100-120, 138-158, 166-186, 188-208, 229-249, 253-273, 326-346, 362-382, 403-423, 424-444, 460-480, and 488-508; these read VAAM…VMSV, VVQS…GALV, VMAY…WAAA, SLWL…VALP, IAMA…PIIM, GIFG…LVWI, WALI…LSWM, AWFS…AGVV, IGFV…SPVI, ASAW…GFLV, MSNT…GFFV, and GFLI…DIFA.

This sequence belongs to the major facilitator superfamily. Sodium/anion cotransporter (TC 2.A.1.14) family.

Its subcellular location is the plastid. The protein resides in the chloroplast membrane. Its function is as follows. Probable anion transporter. The protein is Probable anion transporter 3, chloroplastic (PHT4;3) of Oryza sativa subsp. japonica (Rice).